We begin with the raw amino-acid sequence, 286 residues long: Eukaryotic translation initiation factor 3 subunit J (286 aa).

Disordered stretches follow at residues 1-35 (MSWDDEDFDIPSNSKQAAASWEEEGNDEPLLDSWD), 141-162 (AASGPTPARLTKDTPIDTHPLF), and 229-258 (KAERQARLKKAGGTATGGAGKKKAKPAVKT). Acidic residues predominate over residues 21 to 35 (WEEEGNDEPLLDSWD). The stretch at 35–75 (DIDEEEVARKKKEEEAKKKAEKEALKKKQEESKAKKLSKNK) forms a coiled coil.

This sequence belongs to the eIF-3 subunit J family. In terms of assembly, component of the eukaryotic translation initiation factor 3 (eIF-3) complex.

Its subcellular location is the cytoplasm. Its function is as follows. Component of the eukaryotic translation initiation factor 3 (eIF-3) complex, which is involved in protein synthesis of a specialized repertoire of mRNAs and, together with other initiation factors, stimulates binding of mRNA and methionyl-tRNAi to the 40S ribosome. The eIF-3 complex specifically targets and initiates translation of a subset of mRNAs involved in cell proliferation. The polypeptide is Eukaryotic translation initiation factor 3 subunit J (Debaryomyces hansenii (strain ATCC 36239 / CBS 767 / BCRC 21394 / JCM 1990 / NBRC 0083 / IGC 2968) (Yeast)).